The sequence spans 120 residues: uncharacterized protein (120 aa).

To the N-terminal region of phage HK97/HK620 Gp37/hpaH.

This is an uncharacterized protein from Escherichia coli (strain K12).